Reading from the N-terminus, the 355-residue chain is Elongation factor Ts (355 aa).

Residues 82 to 85 (TDFV) form an involved in Mg(2+) ion dislocation from EF-Tu region.

It belongs to the EF-Ts family.

The protein resides in the cytoplasm. Associates with the EF-Tu.GDP complex and induces the exchange of GDP to GTP. It remains bound to the aminoacyl-tRNA.EF-Tu.GTP complex up to the GTP hydrolysis stage on the ribosome. The chain is Elongation factor Ts (tsf) from Helicobacter pylori (strain ATCC 700392 / 26695) (Campylobacter pylori).